A 154-amino-acid chain; its full sequence is Putative antiporter subunit mnhG2 (154 aa).

A run of 3 helical transmembrane segments spans residues 11 to 31, 51 to 71, and 72 to 92; these read IASILIFLGSIIALISAIGIV, VLLTVVGVLIYFIVNSGFFSV, and RLLLSLVFINLTSPVGMHLIS.

Belongs to the CPA3 antiporters (TC 2.A.63) subunit G family. May form a heterooligomeric complex that consists of seven subunits: mnhA2, mnhB2, mnhC2, mnhD2, mnhE2, mnhF2 and mnhG2.

It localises to the cell membrane. This chain is Putative antiporter subunit mnhG2 (mnhG2), found in Staphylococcus epidermidis (strain ATCC 35984 / DSM 28319 / BCRC 17069 / CCUG 31568 / BM 3577 / RP62A).